Consider the following 203-residue polypeptide: Corrinoid adenosyltransferase (203 aa).

The disordered stretch occupies residues 1–21 (MNESPEKDQRHRERMERKKAV). 41–47 (GNGKGKS) serves as a coordination point for ATP.

This sequence belongs to the Cob(I)alamin adenosyltransferase family. In terms of assembly, monomer. Mn(2+) serves as cofactor.

Its subcellular location is the cytoplasm. It catalyses the reaction 2 cob(II)yrinate a,c diamide + reduced [electron-transfer flavoprotein] + 2 ATP = 2 adenosylcob(III)yrinate a,c-diamide + 2 triphosphate + oxidized [electron-transfer flavoprotein] + 3 H(+). The enzyme catalyses 2 cob(II)alamin + reduced [electron-transfer flavoprotein] + 2 ATP = 2 adenosylcob(III)alamin + 2 triphosphate + oxidized [electron-transfer flavoprotein] + 3 H(+). It participates in cofactor biosynthesis; adenosylcobalamin biosynthesis; adenosylcobalamin from cob(II)yrinate a,c-diamide: step 2/7. In terms of biological role, required for both de novo synthesis of the corrin ring for the assimilation of exogenous corrinoids. Participates in the adenosylation of a variety of incomplete and complete corrinoids. The polypeptide is Corrinoid adenosyltransferase (cobO) (Pseudomonas aeruginosa (strain ATCC 15692 / DSM 22644 / CIP 104116 / JCM 14847 / LMG 12228 / 1C / PRS 101 / PAO1)).